Here is a 105-residue protein sequence, read N- to C-terminus: Late embryogenesis abundant protein Lea5-D (105 aa).

The disordered stretch occupies residues 48–67 (KVERRDAMKESSSSETRAYS). A compositionally biased stretch (low complexity) spans 57-67 (ESSSSETRAYS).

The protein belongs to the LEA type 3 family.

The polypeptide is Late embryogenesis abundant protein Lea5-D (LEA5-D) (Gossypium hirsutum (Upland cotton)).